An 832-amino-acid chain; its full sequence is METNPRKLRSYSYICLIVCIFVLVVCAILSRAEEKEGKGENDDHIPKIYSILVEGEPLAFRASTNINSKAMALEAKKIEEIHDEILGSTLEKGSYTKLYSFKHVINAIAVRTTASQAKKLGKTKGVKAVEEDKGVKLMTTYTPDFLELPQQVWQKISNEGDRRAGEDIVIGFVDTGINPTHPSFAALDLTNPYSSNLSRLHFSGDCEIGPFFPPGSCNGKIISARFFSAGARASGALNSSLDILSPFDASGHGSHVASIAAGNAGVPVIVDGFFYGRASGMAPRSRIAVYKAIYPSIGTLVDVIAAIDQAIMDGVDVLTLSVGPDEPPVDKPTVLGIFDLAMLLARKAGVFVVQAVGNNGPSPSSVLSYSPWVVGVAAGNTDRSYPAPLILDGGQTVQGVGLSGPTLGAPLVQHRLVLAKDAVRTNGSVLQPLTRDIEECQRPENFDPAAVFGSIVICTFSDGFYNQMSTVLAITQTARTLGFMGFILIANPRFGDYVAEPVIFSAPGILIPTVSAAQIILRYYEEKTFRDTRGVATQFGARARIGEGRNSVFAGKAPVVSRFSSRGPAFIDATRSPLDVLKPDILAPGHQIWGAWSLPSAFDPILTGRSFAILSGTSMATPHIAGIGALIKQLNPSWTPAMIASAISTTANEYDSNGEIISAEYYELSRLFPSNHFDHGAGHVNPARALDPGLVLPAGFEDYISFLCSLPNISPATIRDATGVLCTTTLSHPANLNHPSVTISALKESLVVRRSFQDVSNKTETYLGSVLPPNGTTVRLTPTWFTVPPQKTQDLDIEFNVTQVLNKFTFGEVVLTGSLNHIIRIPLSVKTI.

A signal peptide spans 1-27 (METNPRKLRSYSYICLIVCIFVLVVCA). The Inhibitor I9 domain maps to 74-138 (EAKKIEEIHD…VEEDKGVKLM (65 aa)). A Peptidase S8 domain is found at 150 to 690 (QQVWQKISNE…AGHVNPARAL (541 aa)). Asp-174 acts as the Charge relay system in catalysis. Residues Asn-196 and Asn-238 are each glycosylated (N-linked (GlcNAc...) asparagine). His-252 acts as the Charge relay system in catalysis. The 100-residue stretch at 425–524 (TNGSVLQPLT…SAAQIILRYY (100 aa)) folds into the PA domain. Asn-426 is a glycosylation site (N-linked (GlcNAc...) asparagine). Catalysis depends on Ser-618, which acts as the Charge relay system. N-linked (GlcNAc...) asparagine glycosylation is found at Asn-761, Asn-774, and Asn-800.

This sequence belongs to the peptidase S8 family.

The protein resides in the secreted. In terms of biological role, serine protease required for epidermal surface formation in embryos and juvenile plants. Involved in embryonic cuticle formation downstream of BHLH95/ZOU. The sequence is that of Subtilisin-like protease SBT2.4 from Arabidopsis thaliana (Mouse-ear cress).